The primary structure comprises 112 residues: ATP synthase subunit c (112 aa).

Transmembrane regions (helical) follow at residues 36-56 (FSVL…AIGM) and 81-101 (MFIA…IALI).

This sequence belongs to the ATPase C chain family. As to quaternary structure, F-type ATPases have 2 components, F(1) - the catalytic core - and F(0) - the membrane proton channel. F(1) has five subunits: alpha(3), beta(3), gamma(1), delta(1), epsilon(1). F(0) has three main subunits: a(1), b(2) and c(10-14). The alpha and beta chains form an alternating ring which encloses part of the gamma chain. F(1) is attached to F(0) by a central stalk formed by the gamma and epsilon chains, while a peripheral stalk is formed by the delta and b chains.

The protein localises to the cell inner membrane. Functionally, f(1)F(0) ATP synthase produces ATP from ADP in the presence of a proton or sodium gradient. F-type ATPases consist of two structural domains, F(1) containing the extramembraneous catalytic core and F(0) containing the membrane proton channel, linked together by a central stalk and a peripheral stalk. During catalysis, ATP synthesis in the catalytic domain of F(1) is coupled via a rotary mechanism of the central stalk subunits to proton translocation. Its function is as follows. Key component of the F(0) channel; it plays a direct role in translocation across the membrane. A homomeric c-ring of between 10-14 subunits forms the central stalk rotor element with the F(1) delta and epsilon subunits. In Campylobacter jejuni (strain RM1221), this protein is ATP synthase subunit c.